Reading from the N-terminus, the 107-residue chain is UPF0213 protein SG0387 (107 aa).

Positions 4–79 constitute a GIY-YIG domain; that stretch reads SLWHLYLIRT…KQLSRAQKEH (76 aa).

The protein belongs to the UPF0213 family.

The chain is UPF0213 protein SG0387 from Sodalis glossinidius (strain morsitans).